Here is a 232-residue protein sequence, read N- to C-terminus: GTP cyclohydrolase 1 (232 aa).

Residues 1–24 (MSDNLKSYQDNHIENEDEEIYERS) form a disordered region. Positions 121, 124, and 192 each coordinate Zn(2+).

Belongs to the GTP cyclohydrolase I family. Toroid-shaped homodecamer, composed of two pentamers of five dimers.

It catalyses the reaction GTP + H2O = 7,8-dihydroneopterin 3'-triphosphate + formate + H(+). Its pathway is cofactor biosynthesis; 7,8-dihydroneopterin triphosphate biosynthesis; 7,8-dihydroneopterin triphosphate from GTP: step 1/1. In terms of biological role, first enzyme in the biosynthesis of tetrahydrobiopterin (BH4). Catalyzes the conversion of GTP into dihydroneopterin triphosphate (7,8-dihydroneopterin 3'-triphosphate), which is subsequently catalyzed by 6-pyruvoyltetrahydropterin synthase (ptsA) and sepiapterin reductase (sprA). In Dictyostelium discoideum (Social amoeba), this protein is GTP cyclohydrolase 1 (gchA).